The sequence spans 322 residues: Follistatin-A (322 aa).

The first 32 residues, 1-32 (MLRMLKRQQLHPGMILLLFWLCYLIEDQKVQA), serve as a signal peptide directing secretion. The TB domain occupies 33 to 106 (GNCWLQQGKN…TCDNVDCGPG (74 aa)). Intrachain disulfides connect Cys-35–Cys-58, Cys-45–Cys-91, Cys-59–Cys-94, Cys-98–Cys-109, Cys-103–Cys-119, Cys-121–Cys-153, Cys-125–Cys-146, and Cys-135–Cys-167. Asn-75 is a glycosylation site (N-linked (GlcNAc...) asparagine). The 24-residue stretch at 97–120 (TCDNVDCGPGKRCKMNRRSKPRCV) folds into the Follistatin-like 1 domain. 3 consecutive Kazal-like domains span residues 103–169 (CGPG…KCKK), 189–244 (NAYC…KCIK), and 267–321 (RGRC…SCNC). A glycan (N-linked (GlcNAc...) asparagine) is linked at Asn-127. In terms of domain architecture, Follistatin-like 2 spans 170 to 193 (TCRDVLCPGSSTCVVDQTNNAYCV). 3 disulfides stabilise this stretch: Cys-195/Cys-228, Cys-199/Cys-221, and Cys-210/Cys-242. Residues 247-271 (SCDDIHCSAGKKCLWDAKMSRGRCA) enclose the Follistatin-like 3 domain. 3 cysteine pairs are disulfide-bonded: Cys-273–Cys-305, Cys-277–Cys-298, and Cys-287–Cys-319. Asn-291 carries N-linked (GlcNAc...) asparagine glycosylation.

As to quaternary structure, monomer. Not expressed in the organizer region. Expression in gastrulating embryos is confined to anterior and paraxial regions, which give rise to head mesoderm and the first five somites. In addition, expressed transiently in a subset of cells in the posterior notochord anlage. Later, expression is seen in brain, eyes and somites.

Its function is as follows. Binds directly to activin and functions as an activin antagonist. Specific inhibitor of the biosynthesis and secretion of pituitary follicle stimulating hormone (fsh). Inhibits bmp-signaling during later stages of development including late phases of dorsoventral patterning, to refine the early pattern set up by the interaction of chordino and bmp2/4. Not involved in organizer function or early phases of dorsoventral pattern formation. This is Follistatin-A (fsta) from Danio rerio (Zebrafish).